Consider the following 380-residue polypeptide: Cytochrome b (380 aa).

4 helical membrane passes run F34–T54, W78–I99, W114–L134, and F179–T199. Heme b contacts are provided by H84 and H98. H183 and H197 together coordinate heme b. Position 202 (H202) interacts with a ubiquinone. A run of 4 helical transmembrane segments spans residues L227–S247, L289–H309, L321–S341, and F348–P368.

This sequence belongs to the cytochrome b family. In terms of assembly, the cytochrome bc1 complex contains 11 subunits: 3 respiratory subunits (MT-CYB, CYC1 and UQCRFS1), 2 core proteins (UQCRC1 and UQCRC2) and 6 low-molecular weight proteins (UQCRH/QCR6, UQCRB/QCR7, UQCRQ/QCR8, UQCR10/QCR9, UQCR11/QCR10 and a cleavage product of UQCRFS1). This cytochrome bc1 complex then forms a dimer. Heme b serves as cofactor.

The protein resides in the mitochondrion inner membrane. Functionally, component of the ubiquinol-cytochrome c reductase complex (complex III or cytochrome b-c1 complex) that is part of the mitochondrial respiratory chain. The b-c1 complex mediates electron transfer from ubiquinol to cytochrome c. Contributes to the generation of a proton gradient across the mitochondrial membrane that is then used for ATP synthesis. This is Cytochrome b (MT-CYB) from Uria aalge (Common mure).